Reading from the N-terminus, the 380-residue chain is DNA replication and repair protein RecF (380 aa).

Residue 30–37 (GNNAQGKS) coordinates ATP.

It belongs to the RecF family.

It is found in the cytoplasm. Its function is as follows. The RecF protein is involved in DNA metabolism; it is required for DNA replication and normal SOS inducibility. RecF binds preferentially to single-stranded, linear DNA. It also seems to bind ATP. This Crocosphaera subtropica (strain ATCC 51142 / BH68) (Cyanothece sp. (strain ATCC 51142)) protein is DNA replication and repair protein RecF.